Reading from the N-terminus, the 206-residue chain is Outer-membrane lipoprotein LolB (206 aa).

Positions 1–18 (MKTFKFFTALFATAILTA) are cleaved as a signal peptide. C19 is lipidated: N-palmitoyl cysteine. A lipid anchor (S-diacylglycerol cysteine) is attached at C19.

Belongs to the LolB family. In terms of assembly, monomer.

It localises to the cell outer membrane. In terms of biological role, plays a critical role in the incorporation of lipoproteins in the outer membrane after they are released by the LolA protein. The sequence is that of Outer-membrane lipoprotein LolB from Haemophilus influenzae (strain PittGG).